Reading from the N-terminus, the 447-residue chain is Phosphatidylinositol N-acetylglucosaminyltransferase subunit A (447 aa).

Topologically, residues Met-1 to Arg-387 are cytoplasmic. A helical membrane pass occupies residues Phe-388–Leu-408. The Lumenal portion of the chain corresponds to Leu-409 to Lys-447.

It belongs to the glycosyltransferase group 1 family. Glycosyltransferase 4 subfamily. As to expression, expressed in roots, stems, leaves, flowers and pollen grains.

The protein resides in the endoplasmic reticulum membrane. The enzyme catalyses a 1,2-diacyl-sn-glycero-3-phospho-(1D-myo-inositol) + UDP-N-acetyl-alpha-D-glucosamine = a 6-(N-acetyl-alpha-D-glucosaminyl)-1-(1,2-diacyl-sn-glycero-3-phospho)-1D-myo-inositol + UDP + H(+). Its pathway is glycolipid biosynthesis; glycosylphosphatidylinositol-anchor biosynthesis. Necessary for the synthesis of N-acetylglucosaminyl-phosphatidylinositol, the very early intermediate in GPI-anchor biosynthesis. Required for pollen germination and pollen tube growth. This is Phosphatidylinositol N-acetylglucosaminyltransferase subunit A from Arabidopsis thaliana (Mouse-ear cress).